A 333-amino-acid polypeptide reads, in one-letter code: Pro-cathepsin H (333 aa).

Residues Met1–Thr20 form the signal peptide. Residues Ala21–Ser95 constitute a propeptide, activation peptide. N-linked (GlcNAc...) asparagine glycans are attached at residues Asn70 and Asn99. Cystine bridges form between Cys100–Cys325, Cys136–Cys179, Cys170–Cys212, and Cys270–Cys320. The propeptide occupies Lys104–Pro113. Cys139 is a catalytic residue. The N-linked (GlcNAc...) asparagine glycan is linked to Asn228. Catalysis depends on residues His279 and Asn299.

Belongs to the peptidase C1 family. As to quaternary structure, composed of a mini chain and a large chain. The large chain may be split into heavy and light chain. All chains are held together by disulfide bonds. As to expression, widely expressed with highest expression found in non-skeletal tissues. Low levels found in skeletal tissue.

The protein resides in the lysosome. The catalysed reaction is Hydrolysis of proteins, acting as an aminopeptidase (notably, cleaving Arg-|-Xaa bonds) as well as an endopeptidase.. In terms of biological role, important for the overall degradation of proteins in lysosomes. In Mus musculus (Mouse), this protein is Pro-cathepsin H (Ctsh).